We begin with the raw amino-acid sequence, 163 residues long: uncharacterized protein (163 aa).

2 helical membrane-spanning segments follow: residues Tyr7–Val27 and Leu51–Phe71.

Its subcellular location is the cell membrane. This is an uncharacterized protein from Rickettsia prowazekii (strain Madrid E).